The chain runs to 572 residues: Moesin (572 aa).

The 294-residue stretch at 1–294 (MPRGVAVRVT…GNHELYMRRR (294 aa)) folds into the FERM domain. Disordered regions lie at residues 444–508 (SQER…SYLP) and 523–544 (LQAM…QENI). Positions 454–475 (AQEAAAAQHAAQLAAQREAQQL) are enriched in low complexity. The segment covering 480 to 502 (EGEEDEQDHELEVQQDDNDDLDD) has biased composition (acidic residues). Residues 525–544 (AMKDESKGEDRYDKIHQENI) show a composition bias toward basic and acidic residues.

It is found in the cell membrane. It localises to the cytoplasm. Its subcellular location is the cytoskeleton. The protein resides in the cell projection. Probably involved in connections of major cytoskeletal structures to the plasma membrane. This is Moesin from Lytechinus variegatus (Green sea urchin).